The sequence spans 242 residues: Protein GrpE (242 aa).

Disordered stretches follow at residues 1–75 (MSDD…DDEL) and 93–136 (VADL…QQIK). Over residues 23 to 37 (DAESSAAEDASAADD) the composition is skewed to low complexity. A compositionally biased stretch (acidic residues) spans 38–49 (AAPEESTGDEQA). A compositionally biased stretch (polar residues) spans 50–64 (GETTAESSDAESVTV). Positions 96–108 (LETERDEAEETAS) are enriched in acidic residues. A compositionally biased stretch (basic residues) spans 124–133 (YKKRAKKRQQ).

This sequence belongs to the GrpE family. As to quaternary structure, homodimer.

Its subcellular location is the cytoplasm. Its function is as follows. Participates actively in the response to hyperosmotic and heat shock by preventing the aggregation of stress-denatured proteins, in association with DnaK and GrpE. It is the nucleotide exchange factor for DnaK and may function as a thermosensor. Unfolded proteins bind initially to DnaJ; upon interaction with the DnaJ-bound protein, DnaK hydrolyzes its bound ATP, resulting in the formation of a stable complex. GrpE releases ADP from DnaK; ATP binding to DnaK triggers the release of the substrate protein, thus completing the reaction cycle. Several rounds of ATP-dependent interactions between DnaJ, DnaK and GrpE are required for fully efficient folding. The chain is Protein GrpE from Haloferax mediterranei (strain ATCC 33500 / DSM 1411 / JCM 8866 / NBRC 14739 / NCIMB 2177 / R-4) (Halobacterium mediterranei).